A 171-amino-acid polypeptide reads, in one-letter code: ATP synthase subunit b (171 aa).

A helical membrane pass occupies residues 13 to 33; that stretch reads GVEWGTTFVTLVTFVILIILL.

This sequence belongs to the ATPase B chain family. In terms of assembly, F-type ATPases have 2 components, F(1) - the catalytic core - and F(0) - the membrane proton channel. F(1) has five subunits: alpha(3), beta(3), gamma(1), delta(1), epsilon(1). F(0) has three main subunits: a(1), b(2) and c(10-14). The alpha and beta chains form an alternating ring which encloses part of the gamma chain. F(1) is attached to F(0) by a central stalk formed by the gamma and epsilon chains, while a peripheral stalk is formed by the delta and b chains.

It is found in the cell membrane. In terms of biological role, f(1)F(0) ATP synthase produces ATP from ADP in the presence of a proton or sodium gradient. F-type ATPases consist of two structural domains, F(1) containing the extramembraneous catalytic core and F(0) containing the membrane proton channel, linked together by a central stalk and a peripheral stalk. During catalysis, ATP synthesis in the catalytic domain of F(1) is coupled via a rotary mechanism of the central stalk subunits to proton translocation. Functionally, component of the F(0) channel, it forms part of the peripheral stalk, linking F(1) to F(0). The chain is ATP synthase subunit b from Staphylococcus epidermidis (strain ATCC 12228 / FDA PCI 1200).